The primary structure comprises 538 residues: Phosphatidylethanolamine transferase Mcr-2 (538 aa).

5 consecutive transmembrane segments (helical) span residues 14–34, 47–67, 72–92, 121–141, and 161–181; these read PFVL…LTFF, LGFI…IVVL, YVLK…SYFT, LAFF…VAVA, and VSLV…ASFF. Zn(2+) is bound by residues E244 and T283. 3 cysteine pairs are disulfide-bonded: C279-C289, C354-C362, and C412-C420. Phosphothreonine is present on T283. Zn(2+) contacts are provided by D463 and H464.

The protein belongs to the phosphoethanolamine transferase family. As to quaternary structure, monomer. Post-translationally, phosphorylated at Thr-283; may represent an intermediate in the catalytic mechanism.

The protein localises to the cell inner membrane. It carries out the reaction lipid A (E. coli) + a 1,2-diacyl-sn-glycero-3-phosphoethanolamine + H(+) = lipid A 4'-(2-aminoethyl diphosphate) (E. coli) + a 1,2-diacyl-sn-glycerol. Functionally, probably catalyzes the addition of a phosphoethanolamine moiety to lipid A. Phosphoethanolamine modification of lipid A confers polymyxin resistance. Confers resistance to polymyxin-type antibiotics such as colistin. This Escherichia coli protein is Phosphatidylethanolamine transferase Mcr-2.